The following is a 311-amino-acid chain: Putative dihydroorotate dehydrogenase A (fumarate) (311 aa).

Substrate-binding positions include Lys45, 69–73, and Asn128; that span reads NSMGL. 45–46 is a binding site for FMN; sequence KT. Residue Asn128 coordinates FMN. The Nucleophile role is filled by Cys131. FMN contacts are provided by Lys165 and Val193. Residue 194–195 coordinates substrate; sequence NS. Residues Gly220, 248–249, and 270–271 each bind FMN; these read GG and GT.

The protein belongs to the dihydroorotate dehydrogenase family. Type 1 subfamily. As to quaternary structure, homodimer. FMN serves as cofactor.

Its subcellular location is the cytoplasm. It carries out the reaction (S)-dihydroorotate + fumarate = orotate + succinate. The protein operates within pyrimidine metabolism; UMP biosynthesis via de novo pathway. Its function is as follows. Catalyzes the conversion of dihydroorotate to orotate with fumarate as the electron acceptor. The sequence is that of Putative dihydroorotate dehydrogenase A (fumarate) (pyrD) from Streptococcus pyogenes serotype M18 (strain MGAS8232).